The sequence spans 641 residues: WW domain-binding protein 11 (641 aa).

Positions 1–11 (MGRRSTSSTKS) are enriched in polar residues. The tract at residues 1–37 (MGRRSTSSTKSGKFMNPTDQARKEARKRELKKNKKQR) is disordered. Residues 1-45 (MGRRSTSSTKSGKFMNPTDQARKEARKRELKKNKKQRMMVRAAVL) are required for nuclear import. At Lys13 the chain carries N6-acetyllysine. Basic residues predominate over residues 28–37 (RELKKNKKQR). Positions 75-133 (EKVLKDKRKKLRETFERILRLYEKENPDIYKELRKLEVEYEQKRAQLSQYFDAVKNAQH) form a coiled coil. The residue at position 181 (Ser181) is a Phosphoserine. Positions 188 to 213 (HGVPRLPPGRKPPGPPPGPPPPQVLQ) are disordered. The residue at position 192 (Arg192) is an Omega-N-methylarginine. A compositionally biased stretch (pro residues) spans 192–210 (RLPPGRKPPGPPPGPPPPQ). Positions 217-221 (RKVGF) are interaction with PP1. Position 236 is a phosphotyrosine (Tyr236). The segment at 236 to 550 (YSPELAQRGH…IQRPKADDAS (315 aa)) is disordered. Ser237 carries the post-translational modification Phosphoserine. The segment covering 253–263 (SEDDGYPEDMD) has biased composition (acidic residues). Positions 276–304 (TDRSDAESDGDEFGHREDSERDNTEEKKS) are enriched in basic and acidic residues. 2 positions are modified to phosphoserine: Ser279 and Ser283. Positions 306–310 (LSVRF) are interaction with PP1. A compositionally biased stretch (acidic residues) spans 351 to 365 (EFSEEEDADDSDDSE). Ser353, Ser361, and Ser364 each carry phosphoserine. Over residues 366 to 380 (AEKQSQKQHKDDGHS) the composition is skewed to basic and acidic residues. The span at 381–404 (DSTAAASSQQQAPPQSAPASQIQA) shows a compositional bias: low complexity. Composition is skewed to pro residues over residues 405–447 (PPMP…PPGM), 456–504 (RLLP…PPRP), and 510–530 (PLVP…PLPN). Positions 455 to 466 (PRLLPPGPPPGR) match the PGR motif. Lys557 participates in a covalent cross-link: Glycyl lysine isopeptide (Lys-Gly) (interchain with G-Cter in SUMO2). Lys565 carries the post-translational modification N6-acetyllysine. Lys572 is covalently cross-linked (Glycyl lysine isopeptide (Lys-Gly) (interchain with G-Cter in SUMO2)). Positions 588 to 620 (ENKGATAVPQRRSEDDSAVPVAKAAPRSGPSVA) are disordered. Position 600 is a phosphoserine (Ser600). The required for nuclear export stretch occupies residues 633–641 (FMKEMEGLL).

As to quaternary structure, interacts via the PGR motif with PQBP1 in the nucleus. Interacts with the WW domains of WBP4. Interacts with PPP1CA, PPP1CB and PPP1CC. As to expression, ubiquitously expressed, with highest levels in testis.

The protein localises to the nucleus. It localises to the cytoplasm. Functionally, activates pre-mRNA splicing. May inhibit PP1 phosphatase activity. The sequence is that of WW domain-binding protein 11 (Wbp11) from Mus musculus (Mouse).